A 263-amino-acid chain; its full sequence is Transmembrane protein 176B (263 aa).

4 helical membrane-spanning segments follow: residues 61-81 (LGVTQILLGLVSCVLGVCLYF), 89-109 (ASGCAFWSGSVAILAGVGIVI), 125-145 (LLLACSATAAAATVMGVKSLI), and 197-217 (LFLAFCILFTVICILKIVVSV). A disordered region spans residues 242–263 (KKLLGGDSAPASPTKEKIPVTP). 2 positions are modified to phosphoserine: Ser-249 and Ser-253.

Belongs to the TMEM176 family. As to expression, expressed in spleen by a variety of myeloid cells including macrophages and dendritic cells (at protein level). Ubiquitously expressed with higher expression in lymphoid tissues.

It is found in the nucleus membrane. In terms of biological role, required for the development of cerebellar granule cells. May play a role in the process of maturation of dendritic cells. The protein is Transmembrane protein 176B (Tmem176b) of Rattus norvegicus (Rat).